Reading from the N-terminus, the 355-residue chain is Protein RecA (355 aa).

Position 67 to 74 (67 to 74) interacts with ATP; it reads GPESSGKT.

This sequence belongs to the RecA family.

The protein localises to the cytoplasm. Its function is as follows. Can catalyze the hydrolysis of ATP in the presence of single-stranded DNA, the ATP-dependent uptake of single-stranded DNA by duplex DNA, and the ATP-dependent hybridization of homologous single-stranded DNAs. It interacts with LexA causing its activation and leading to its autocatalytic cleavage. The sequence is that of Protein RecA from Proteus mirabilis (strain HI4320).